We begin with the raw amino-acid sequence, 267 residues long: Dihydropteroate synthase (267 aa).

The 251-residue stretch at 1–251 folds into the Pterin-binding domain; that stretch reads MTKTKIMGIL…NVELNAKLAK (251 aa). Asn-11 contacts Mg(2+). (7,8-dihydropterin-6-yl)methyl diphosphate-binding positions include Thr-51, Asp-84, Asn-103, Asp-167, Lys-203, and 239–241; that span reads RVH.

Belongs to the DHPS family. In terms of assembly, homodimer. Requires Mg(2+) as cofactor.

It catalyses the reaction (7,8-dihydropterin-6-yl)methyl diphosphate + 4-aminobenzoate = 7,8-dihydropteroate + diphosphate. It functions in the pathway cofactor biosynthesis; tetrahydrofolate biosynthesis; 7,8-dihydrofolate from 2-amino-4-hydroxy-6-hydroxymethyl-7,8-dihydropteridine diphosphate and 4-aminobenzoate: step 1/2. In terms of biological role, catalyzes the condensation of para-aminobenzoate (pABA) with 6-hydroxymethyl-7,8-dihydropterin diphosphate (DHPt-PP) to form 7,8-dihydropteroate (H2Pte), the immediate precursor of folate derivatives. This is Dihydropteroate synthase (folP) from Staphylococcus aureus (strain MW2).